Consider the following 190-residue polypeptide: UPF0301 protein TC_0483 (190 aa).

It belongs to the UPF0301 (AlgH) family.

The sequence is that of UPF0301 protein TC_0483 from Chlamydia muridarum (strain MoPn / Nigg).